The chain runs to 218 residues: Holliday junction branch migration complex subunit RuvA (218 aa).

The domain I stretch occupies residues 1 to 64 (MIGKITGRLE…EDVMQLFGFT (64 aa)). The interval 65–143 (TLTEKEWHRL…SVMGMSDTQA (79 aa)) is domain II. Residues 144–164 (TVAAQSSDAVIETRAAPSPVV) form a flexible linker region. The tract at residues 165–218 (QNPSAQAEALSALSNLGYAPGDAAAAVAQAAGELPDAETPDLIRAALKRLAPKG) is domain III.

The protein belongs to the RuvA family. As to quaternary structure, homotetramer. Forms an RuvA(8)-RuvB(12)-Holliday junction (HJ) complex. HJ DNA is sandwiched between 2 RuvA tetramers; dsDNA enters through RuvA and exits via RuvB. An RuvB hexamer assembles on each DNA strand where it exits the tetramer. Each RuvB hexamer is contacted by two RuvA subunits (via domain III) on 2 adjacent RuvB subunits; this complex drives branch migration. In the full resolvosome a probable DNA-RuvA(4)-RuvB(12)-RuvC(2) complex forms which resolves the HJ.

It is found in the cytoplasm. In terms of biological role, the RuvA-RuvB-RuvC complex processes Holliday junction (HJ) DNA during genetic recombination and DNA repair, while the RuvA-RuvB complex plays an important role in the rescue of blocked DNA replication forks via replication fork reversal (RFR). RuvA specifically binds to HJ cruciform DNA, conferring on it an open structure. The RuvB hexamer acts as an ATP-dependent pump, pulling dsDNA into and through the RuvAB complex. HJ branch migration allows RuvC to scan DNA until it finds its consensus sequence, where it cleaves and resolves the cruciform DNA. This chain is Holliday junction branch migration complex subunit RuvA, found in Roseobacter denitrificans (strain ATCC 33942 / OCh 114) (Erythrobacter sp. (strain OCh 114)).